The following is a 224-amino-acid chain: Probable Brix domain-containing ribosomal biogenesis protein (224 aa).

Positions 1–196 (MMLITTSHRP…IWIMEDGRRW (196 aa)) constitute a Brix domain.

Functionally, probably involved in the biogenesis of the ribosome. This is Probable Brix domain-containing ribosomal biogenesis protein from Pyrococcus horikoshii (strain ATCC 700860 / DSM 12428 / JCM 9974 / NBRC 100139 / OT-3).